Consider the following 348-residue polypeptide: Selenide, water dikinase (348 aa).

Cysteine 17 is a catalytic residue. ATP-binding positions include lysine 20 and 48-50 (TRD). Position 51 (aspartate 51) interacts with Mg(2+). ATP is bound by residues aspartate 68, aspartate 91, and 139–141 (GHS). Aspartate 91 lines the Mg(2+) pocket. Aspartate 227 is a binding site for Mg(2+).

This sequence belongs to the selenophosphate synthase 1 family. Class I subfamily. As to quaternary structure, homodimer. Mg(2+) serves as cofactor.

It catalyses the reaction hydrogenselenide + ATP + H2O = selenophosphate + AMP + phosphate + 2 H(+). Its function is as follows. Synthesizes selenophosphate from selenide and ATP. This chain is Selenide, water dikinase, found in Yersinia pseudotuberculosis serotype I (strain IP32953).